Consider the following 292-residue polypeptide: Glycine--tRNA ligase alpha subunit (292 aa).

Belongs to the class-II aminoacyl-tRNA synthetase family. In terms of assembly, tetramer of two alpha and two beta subunits.

It localises to the cytoplasm. It carries out the reaction tRNA(Gly) + glycine + ATP = glycyl-tRNA(Gly) + AMP + diphosphate. This Synechococcus sp. (strain ATCC 27144 / PCC 6301 / SAUG 1402/1) (Anacystis nidulans) protein is Glycine--tRNA ligase alpha subunit.